We begin with the raw amino-acid sequence, 1009 residues long: Protein-tyrosine kinase 2-beta (1009 aa).

Residues 39–359 enclose the FERM domain; that stretch reads RILKVCFYSN…GYCRLQGEHK (321 aa). Phosphoserine occurs at positions 361, 375, and 399. A Phosphotyrosine; by autocatalysis modification is found at Y402. The 259-residue stretch at 425-683 folds into the Protein kinase domain; the sequence is VVLNRILGEG…ELVCSLSDIY (259 aa). ATP contacts are provided by residues 431 to 439, K457, and 503 to 509; these read LGEGFFGEV and ELYPYGE. D549 functions as the Proton acceptor in the catalytic mechanism. Y579 bears the Phosphotyrosine mark. Residue Y580 is modified to Phosphotyrosine; by SRC, FYN and LCK. Residues 696-728 form a disordered region; that stretch reads NARYRPPKILEPTTFQEPPPKPSRPKYRPPPQT. A compositionally biased stretch (pro residues) spans 712-727; it reads EPPPKPSRPKYRPPPQ. Y722 is subject to Phosphotyrosine. Residue S762 is modified to Phosphoserine. T765 bears the Phosphothreonine mark. Positions 801 to 1009 are interaction with TGFB1I1; it reads KIKMKQVLER…VANLAHPPAE (209 aa). A Phosphotyrosine modification is found at Y834. Residue S839 is modified to Phosphoserine. T842 carries the post-translational modification Phosphothreonine. At Y849 the chain carries Phosphotyrosine. The residue at position 866 (S866) is a Phosphoserine. Residues 868–1009 are focal adhesion targeting (FAT); that stretch reads QPTANLDRTD…VANLAHPPAE (142 aa). Y881 is modified (phosphotyrosine).

It belongs to the protein kinase superfamily. Tyr protein kinase family. FAK subfamily. As to quaternary structure, homodimer, or homooligomer. Interacts with KCNA2. Interacts with NPHP1, ASAP1, ASAP2, ARHGAP26, SKAP2 and TGFB1I1. The Tyr-402 phosphorylated form interacts with SRC (via SH2 domain) and SRC family members. Forms a signaling complex with EPHA1, LCK and phosphatidylinositol 3-kinase; upon activation by EFNA1. Interacts with GRB2 (via SH2 domain). Interacts with P53/TP53 and MDM2. Interacts with MYLK. Interacts with BCAR1. Interacts with RB1CC1. Interacts with RHOU. Interacts with VAV1. Interacts with PDPK1. Interacts with DLG4. Interacts with LPXN and PTPN12. Interacts with SIRPA and SH2D3C. Interacts (hypophosphorylated) with PXN. Interacts with ARHGAP10. Post-translationally, phosphorylated on tyrosine residues in response to various stimuli that elevate the intracellular calcium concentration; this activation is indirect and may be mediated by production of reactive oxygen species (ROS). Tyr-402 is the major autophosphorylation site, but other kinases can also phosphorylate Tyr-402. Autophosphorylation occurs in trans, i.e. one subunit of the dimeric receptor phosphorylates tyrosine residues on the other subunit. Phosphorylation at Tyr-402 promotes interaction with SRC and SRC family members, leading to phosphorylation at Tyr-579; Tyr-580 and Tyr-881. Phosphorylation at Tyr-881 is important for interaction with GRB2. Phosphorylated on tyrosine residues upon activation of FGR and PKC. Recruitment by NPHP1 to cell matrix adhesions initiates Tyr-402 phosphorylation. In monocytes, adherence to substrata is required for tyrosine phosphorylation and kinase activation. Angiotensin II, thapsigargin and L-alpha-lysophosphatidic acid (LPA) also induce autophosphorylation and increase kinase activity. Phosphorylation by MYLK promotes ITGB2 activation and is thus essential to trigger neutrophil transmigration during lung injury. Dephosphorylated by PTPN12.

It is found in the cytoplasm. The protein resides in the perinuclear region. Its subcellular location is the cell membrane. It localises to the cell junction. The protein localises to the focal adhesion. It is found in the cell projection. The protein resides in the lamellipodium. Its subcellular location is the cell cortex. It localises to the nucleus. It catalyses the reaction L-tyrosyl-[protein] + ATP = O-phospho-L-tyrosyl-[protein] + ADP + H(+). With respect to regulation, activated in response to stimuli that lead to increased intracellular Ca(2+) levels; this activation is indirect and may be mediated by calcium-mediated production of reactive oxygen species (ROS). Activated by autophosphorylation at Tyr-402; this creates a binding site for SRC family kinases and leads to phosphorylation at additional tyrosine residues. Phosphorylation at Tyr-402, Tyr-579 and Tyr-580 is required for optimal kinase activity. Functionally, non-receptor protein-tyrosine kinase that regulates reorganization of the actin cytoskeleton, cell polarization, cell migration, adhesion, spreading and bone remodeling. Plays a role in the regulation of the humoral immune response, and is required for normal levels of marginal B-cells in the spleen and normal migration of splenic B-cells. Required for normal macrophage polarization and migration towards sites of inflammation. Regulates cytoskeleton rearrangement and cell spreading in T-cells, and contributes to the regulation of T-cell responses. Promotes osteoclastic bone resorption; this requires both PTK2B/PYK2 and SRC. May inhibit differentiation and activity of osteoprogenitor cells. Functions in signaling downstream of integrin and collagen receptors, immune receptors, G-protein coupled receptors (GPCR), cytokine, chemokine and growth factor receptors, and mediates responses to cellular stress. Forms multisubunit signaling complexes with SRC and SRC family members upon activation; this leads to the phosphorylation of additional tyrosine residues, creating binding sites for scaffold proteins, effectors and substrates. Regulates numerous signaling pathways. Promotes activation of phosphatidylinositol 3-kinase and of the AKT1 signaling cascade. Promotes activation of NOS3. Regulates production of the cellular messenger cGMP. Promotes activation of the MAP kinase signaling cascade, including activation of MAPK1/ERK2, MAPK3/ERK1 and MAPK8/JNK1. Promotes activation of Rho family GTPases, such as RHOA and RAC1. Recruits the ubiquitin ligase MDM2 to P53/TP53 in the nucleus, and thereby regulates P53/TP53 activity, P53/TP53 ubiquitination and proteasomal degradation. Acts as a scaffold, binding to both PDPK1 and SRC, thereby allowing SRC to phosphorylate PDPK1 at 'Tyr-9, 'Tyr-373', and 'Tyr-376'. Promotes phosphorylation of NMDA receptors by SRC family members, and thereby contributes to the regulation of NMDA receptor ion channel activity and intracellular Ca(2+) levels. May also regulate potassium ion transport by phosphorylation of potassium channel subunits. Phosphorylates SRC; this increases SRC kinase activity. Phosphorylates ASAP1, NPHP1, KCNA2 and SHC1. Promotes phosphorylation of ASAP2, RHOU and PXN; this requires both SRC and PTK2/PYK2. The polypeptide is Protein-tyrosine kinase 2-beta (Ptk2b) (Mus musculus (Mouse)).